Reading from the N-terminus, the 508-residue chain is Cytochrome P450 monooxygenase aflV (508 aa).

Residues 18 to 38 (LTWWFLAVGGAWIVSKIIKIL) form a helical membrane-spanning segment. Asn-192, Asn-209, Asn-302, and Asn-408 each carry an N-linked (GlcNAc...) asparagine glycan. Heme is bound at residue Cys-453.

Belongs to the cytochrome P450 family. It depends on heme as a cofactor.

It localises to the membrane. Its pathway is mycotoxin biosynthesis; aflatoxin biosynthesis. Cytochrome P450 monooxygenase; part of the gene cluster that mediates the biosynthesis of aflatoxins, a group of polyketide-derived furanocoumarins, and part of the most toxic and carcinogenic compounds among the known mycotoxins. The four major aflatoxins produced by A.parasiticus are aflatoxin B1 (AFB1), aflatoxin B2 (AFB2), aflatoxin G1 (AFG1) and aflatoxin G2 (AFG2). The role of the cytochrome P450 monooxygenase aflV in aflatoxin biosynthesis has still to be characterized. The biosynthesis of aflatoxins begins with the norsolorinic acid synthase aflC that combines a hexanoyl starter unit produced by the fatty acid synthase aflA/aflB and 7 malonyl-CoA extender units to synthesize the precursor NOR. The second step is the conversion of NOR to averantin and requires the norsolorinic acid ketoreductase aflD, which catalyzes the dehydration of norsolorinic acid to form (1'S)-averantin. The norsolorinic acid reductases aflE and aflF may also play a role in the conversion of NOR to AVN. The cytochrome P450 monooxygenase aflG then catalyzes the hydroxylation of AVN to 5'hydroxyaverantin (HAVN). The next step is performed by the 5'-hydroxyaverantin dehydrogenase aflH that transforms HAVN to 5'-oxoaverantin (OAVN) which is further converted to averufin (AVF) by aflK that plays a dual role in the pathway, as a 5'-oxoaverantin cyclase that mediates conversion of 5'-oxoaverantin, as well as a versicolorin B synthase in a later step in the pathway. The averufin oxidase aflI catalyzes the conversion of AVF to versiconal hemiacetal acetate (VHA). VHA is then the substrate for the versiconal hemiacetal acetate esterase aflJ to yield versiconal (VAL). Versicolorin B synthase aflK then converts VAL to versicolorin B (VERB) by closing the bisfuran ring of aflatoxin which is required for DNA-binding, thus giving to aflatoxin its activity as a mutagen. Then, the activity of the versicolorin B desaturase aflL leads to versicolorin A (VERA). A branch point starts from VERB since it can also be converted to dihydrodemethylsterigmatocystin (DMDHST), probably also by aflL, VERA being a precursor for aflatoxins B1 and G1, and DMDHST for aflatoxins B2 and G2. Next, the versicolorin reductase aflM and the cytochrome P450 monooxygenase aflN are involved in conversion of VERA to demethylsterigmatocystin (DMST). AflX and aflY seem also involved in this step, through probable aflX-mediated epoxide ring-opening step following versicolorin A oxidation and aflY-mediated Baeyer-Villiger oxidation required for the formation of the xanthone ring. The methyltransferase aflO then leads to the modification of DMST to sterigmatocystin (ST), and of DMDHST to dihydrosterigmatocystin (DHST). Both ST and DHST are then substrates of the O-methyltransferase aflP to yield O-methylsterigmatocystin (OMST) and dihydro-O-methylsterigmatocystin (DHOMST), respectively. Finally OMST is converted to aflatoxins B1 and G1, and DHOMST to aflatoxins B2 and G2, via the action of several enzymes including O-methylsterigmatocystin oxidoreductase aflQ, the cytochrome P450 monooxygenase aflU, but also the NADH-dependent flavin oxidoreductase nadA which is specifically required for the synthesis of AFG1. The polypeptide is Cytochrome P450 monooxygenase aflV (Aspergillus parasiticus (strain ATCC 56775 / NRRL 5862 / SRRC 143 / SU-1)).